Consider the following 474-residue polypeptide: tRNA-2-methylthio-N(6)-dimethylallyladenosine synthase (474 aa).

The MTTase N-terminal domain occupies 3 to 120 (KKLHIKTWGC…LPEMINSVRG (118 aa)). Residues cysteine 12, cysteine 49, cysteine 83, cysteine 157, cysteine 161, and cysteine 164 each coordinate [4Fe-4S] cluster. The Radical SAM core domain occupies 143 to 375 (RADGPTAFVS…QDRINQQTTA (233 aa)). A TRAM domain is found at 378-441 (RRKLGTVQRI…ANSLRGMLLR (64 aa)).

It belongs to the methylthiotransferase family. MiaB subfamily. As to quaternary structure, monomer. [4Fe-4S] cluster is required as a cofactor.

It is found in the cytoplasm. The catalysed reaction is N(6)-dimethylallyladenosine(37) in tRNA + (sulfur carrier)-SH + AH2 + 2 S-adenosyl-L-methionine = 2-methylsulfanyl-N(6)-dimethylallyladenosine(37) in tRNA + (sulfur carrier)-H + 5'-deoxyadenosine + L-methionine + A + S-adenosyl-L-homocysteine + 2 H(+). In terms of biological role, catalyzes the methylthiolation of N6-(dimethylallyl)adenosine (i(6)A), leading to the formation of 2-methylthio-N6-(dimethylallyl)adenosine (ms(2)i(6)A) at position 37 in tRNAs that read codons beginning with uridine. The sequence is that of tRNA-2-methylthio-N(6)-dimethylallyladenosine synthase from Erwinia tasmaniensis (strain DSM 17950 / CFBP 7177 / CIP 109463 / NCPPB 4357 / Et1/99).